The chain runs to 366 residues: tRNA/tmRNA (uracil-C(5))-methyltransferase (366 aa).

S-adenosyl-L-methionine contacts are provided by Gln190, Tyr218, Asn223, Glu239, and Asp299. Cys324 (nucleophile) is an active-site residue. Glu358 functions as the Proton acceptor in the catalytic mechanism.

This sequence belongs to the class I-like SAM-binding methyltransferase superfamily. RNA M5U methyltransferase family. TrmA subfamily.

It carries out the reaction uridine(54) in tRNA + S-adenosyl-L-methionine = 5-methyluridine(54) in tRNA + S-adenosyl-L-homocysteine + H(+). The enzyme catalyses uridine(341) in tmRNA + S-adenosyl-L-methionine = 5-methyluridine(341) in tmRNA + S-adenosyl-L-homocysteine + H(+). Dual-specificity methyltransferase that catalyzes the formation of 5-methyluridine at position 54 (m5U54) in all tRNAs, and that of position 341 (m5U341) in tmRNA (transfer-mRNA). The polypeptide is tRNA/tmRNA (uracil-C(5))-methyltransferase (Escherichia coli O81 (strain ED1a)).